Consider the following 246-residue polypeptide: MLKVLVVDDEMLARDELKYLLERTKEVEIIGEADCVEDALEELMQSRPDIVFLDIQLSDDNGFEIANILKKMKNPPAIVFATAYDQYALQAFEVDALDYILKPFDEERIVQTLKKYKKQKQSQIETKHEIKGTDVTVEMHKLALPIEESIVLVNIEDIVYVGLVDGKVTVKTMRETYVTHDTLVILEKKLPQVSFMRVHRSFIANINHITEIQPWFNSTYNLIMKEGSKVPVSRTYAKELKKLLRI.

Positions 3–117 (KVLVVDDEML…RIVQTLKKYK (115 aa)) constitute a Response regulatory domain. Residues 142–246 (LALPIEESIV…AKELKKLLRI (105 aa)) form the HTH LytTR-type domain.

In terms of processing, phosphorylated by LytS.

It is found in the cytoplasm. In terms of biological role, member of the two-component regulatory system LytS/LytT that probably regulates genes involved in cell wall metabolism. In Bacillus cereus (strain ATCC 14579 / DSM 31 / CCUG 7414 / JCM 2152 / NBRC 15305 / NCIMB 9373 / NCTC 2599 / NRRL B-3711), this protein is Sensory transduction protein LytT (lytT).